A 256-amino-acid polypeptide reads, in one-letter code: Thiazole synthase (256 aa).

Residue Lys98 is the Schiff-base intermediate with DXP of the active site. 1-deoxy-D-xylulose 5-phosphate contacts are provided by residues Gly159, 185–186 (AG), and 207–208 (NT).

The protein belongs to the ThiG family. Homotetramer. Forms heterodimers with either ThiH or ThiS.

The protein localises to the cytoplasm. It catalyses the reaction [ThiS sulfur-carrier protein]-C-terminal-Gly-aminoethanethioate + 2-iminoacetate + 1-deoxy-D-xylulose 5-phosphate = [ThiS sulfur-carrier protein]-C-terminal Gly-Gly + 2-[(2R,5Z)-2-carboxy-4-methylthiazol-5(2H)-ylidene]ethyl phosphate + 2 H2O + H(+). It functions in the pathway cofactor biosynthesis; thiamine diphosphate biosynthesis. In terms of biological role, catalyzes the rearrangement of 1-deoxy-D-xylulose 5-phosphate (DXP) to produce the thiazole phosphate moiety of thiamine. Sulfur is provided by the thiocarboxylate moiety of the carrier protein ThiS. In vitro, sulfur can be provided by H(2)S. This Syntrophobacter fumaroxidans (strain DSM 10017 / MPOB) protein is Thiazole synthase.